We begin with the raw amino-acid sequence, 296 residues long: L-isoleucine 3(1)-dioxygenase (296 aa).

The Fe cation site is built by H176, D178, and H267.

This sequence belongs to the iron/ascorbate-dependent oxidoreductase family. L-ascorbate serves as cofactor. Fe(2+) is required as a cofactor.

The enzyme catalyses L-isoleucine + 2-oxoglutarate + O2 = 3(1)-hydroxy-L-isoleucine + succinate + CO2. Functionally, catalyzes the hydroxylation of L-isoleucine at the C-4' position to form L-4'-hydroxyisoleucine (4'-HIL). Exhibits low activity with L-valine and L-methionine. In Pantoea ananatis (strain AJ13355), this protein is L-isoleucine 3(1)-dioxygenase.